Consider the following 286-residue polypeptide: Aspartate/glutamate leucyltransferase (286 aa).

This sequence belongs to the R-transferase family. Bpt subfamily.

The protein localises to the cytoplasm. It catalyses the reaction N-terminal L-glutamyl-[protein] + L-leucyl-tRNA(Leu) = N-terminal L-leucyl-L-glutamyl-[protein] + tRNA(Leu) + H(+). The catalysed reaction is N-terminal L-aspartyl-[protein] + L-leucyl-tRNA(Leu) = N-terminal L-leucyl-L-aspartyl-[protein] + tRNA(Leu) + H(+). Its function is as follows. Functions in the N-end rule pathway of protein degradation where it conjugates Leu from its aminoacyl-tRNA to the N-termini of proteins containing an N-terminal aspartate or glutamate. In Jannaschia sp. (strain CCS1), this protein is Aspartate/glutamate leucyltransferase.